The chain runs to 343 residues: Retroviral-like aspartic protease 1 (343 aa).

Residues 1 to 55 (MGSPGASLGIKKALQSEQATALPASAPAVSQPTAPAPSCLPKAGQVIPTLLREAP) lie on the Cytoplasmic side of the membrane. Residues 1–190 (MGSPGASLGI…HLPKEIVFAN (190 aa)) constitute a propeptide that is removed on maturation. A helical transmembrane segment spans residues 56-76 (FSSVIAPTLLCGFLFLAWVAA). Residues 77 to 343 (EVPEESSRMA…SEEGRQELSH (267 aa)) lie on the Extracellular side of the membrane. Residues 207 to 288 (VRFLVDSGAQ…AEEAIIGTDV (82 aa)) enclose the Peptidase A2 domain. The active site involves D212. N-linked (GlcNAc...) asparagine glycosylation is present at N276. Residues 327 to 343 (LIEEDPSSEEGRQELSH) constitute a propeptide that is removed on maturation.

In terms of assembly, homodimer. Undergoes autocleavage which is necessary for activation of the protein. As to expression, expressed primarily in the granular layer of the epidermis and inner root sheath of hair follicles. In psoriatic skin, expressed throughout the stratum corneum. In ulcerated skin, expressed in the stratum granulosum of intact epidermis but almost absent from ulcerated regions. Expressed in differentiated areas of squamous cell carcinomas but not in undifferentiated tumors.

It localises to the membrane. In terms of biological role, protease responsible for filaggrin processing, essential for the maintenance of a proper epidermis organization. In Homo sapiens (Human), this protein is Retroviral-like aspartic protease 1.